We begin with the raw amino-acid sequence, 289 residues long: uncharacterized protein (289 aa).

9 helical membrane-spanning segments follow: residues 4-24 (NLLA…GTVV), 44-64 (LNAL…LAYF), 68-88 (VALG…SLMF), 106-126 (IFWA…GRPL), 138-158 (IPVL…AEYV), 166-186 (ILGL…KAAV), 196-216 (GLIL…GTIV), 230-250 (LPAM…LVLG), and 258-278 (WEWI…IALS).

It is found in the cell membrane. This is an uncharacterized protein from Corynebacterium glutamicum (strain ATCC 13032 / DSM 20300 / JCM 1318 / BCRC 11384 / CCUG 27702 / LMG 3730 / NBRC 12168 / NCIMB 10025 / NRRL B-2784 / 534).